Consider the following 441-residue polypeptide: Probable glycine dehydrogenase (decarboxylating) subunit 1 (441 aa).

It belongs to the GcvP family. N-terminal subunit subfamily. In terms of assembly, the glycine cleavage system is composed of four proteins: P, T, L and H. In this organism, the P 'protein' is a heterodimer of two subunits.

It catalyses the reaction N(6)-[(R)-lipoyl]-L-lysyl-[glycine-cleavage complex H protein] + glycine + H(+) = N(6)-[(R)-S(8)-aminomethyldihydrolipoyl]-L-lysyl-[glycine-cleavage complex H protein] + CO2. Functionally, the glycine cleavage system catalyzes the degradation of glycine. The P protein binds the alpha-amino group of glycine through its pyridoxal phosphate cofactor; CO(2) is released and the remaining methylamine moiety is then transferred to the lipoamide cofactor of the H protein. This Halobacterium salinarum (strain ATCC 700922 / JCM 11081 / NRC-1) (Halobacterium halobium) protein is Probable glycine dehydrogenase (decarboxylating) subunit 1.